The sequence spans 243 residues: Myelin protein P0 (243 aa).

The N-terminal stretch at 1–26 (MESSGLRAPCSLLVLLSALVLPPTLA) is a signal peptide. Positions 27 to 141 (IEVYTDREVY…VGKSSYVHLQ (115 aa)) constitute an Ig-like V-type domain. Residues 27 to 154 (IEVYTDREVY…KGAARAGLVL (128 aa)) lie on the Extracellular side of the membrane. Cysteines 47 and 123 form a disulfide. An N-linked (GlcNAc...) asparagine glycan is attached at Asn-118. A helical membrane pass occupies residues 155–175 (GIIIAVALALVIVVTILILLI). Residues 176–243 (RYCWLRRQVR…GIGDSRKDRK (68 aa)) lie on the Cytoplasmic side of the membrane. The tract at residues 201-243 (AKDSSKRSSRQTPILYAMLDQTRGKASEKKGKGGIGDSRKDRK) is disordered. Positions 222 to 243 (TRGKASEKKGKGGIGDSRKDRK) are enriched in basic and acidic residues.

It belongs to the myelin P0 protein family.

It is found in the cell membrane. Its function is as follows. Creation of an extracellular membrane face which guides the wrapping process and ultimately compacts adjacent lamellae. In Xenopus tropicalis (Western clawed frog), this protein is Myelin protein P0 (mpz).